The primary structure comprises 354 residues: Replication-associated protein (354 aa).

The region spanning 11 to 114 is the CRESS-DNA virus Rep endonuclease domain; the sequence is LHRNANTFLT…PLAVFERGTF (104 aa). The short motif at 18–21 is the RCR-1 element; sequence FLTY. Residues glutamate 52, histidine 60, and histidine 62 each coordinate a divalent metal cation. Positions 60–62 match the RCR-2 motif; sequence HLH. Tyrosine 100 (for DNA cleavage activity) is an active-site residue. Residues 100 to 103 carry the RCR-3 motif; the sequence is YILK. Glutamate 104 contacts a divalent metal cation. An oligomerization region spans residues 174 to 186; that stretch reads SANKLFPDIQEEF. 228 to 235 lines the ATP pocket; it reads GPTRTGKS. The segment at 251 to 269 is transactivation; the sequence is VDWSSYNEDAIYNIVDDIP. Positions 291–302 match the Nuclear localization signal motif; that stretch reads KYGKKKKVQMKS.

The protein belongs to the geminiviridae Rep protein family. In terms of assembly, homooligomer. Rep binds to repeated DNA motifs (iterons). Forms the O-complex, which is a Rep-DNA complex involved in the initiation of RCR. Part of the C- and V-complexes which are RepA-Rep-DNA complexes involved in the c-sense and v-sense transcription. Requires Mg(2+) as cofactor. Mn(2+) serves as cofactor.

It is found in the host nucleus. Its function is as follows. Essential for the replication of viral ssDNA. The closed circular ssDNA genome is first converted to a superhelical dsDNA. Rep binds a specific region at the genome origin of replication. It introduces an endonucleolytic nick within the conserved sequence 5'-TAATATTAC-3' in the intergenic region of the genome present in all geminiviruses, thereby initiating the rolling circle replication (RCR). Following cleavage, binds covalently to the 5'-phosphate of DNA as a tyrosyl ester. The cleavage gives rise to a free 3'-OH that serves as a primer for the cellular DNA polymerase. The polymerase synthesizes the (+) strand DNA by rolling circle mechanism. After one round of replication, a Rep-catalyzed nucleotidyl transfer reaction releases a circular single-stranded virus genome, thereby terminating the replication. Displays origin-specific DNA cleavage, nucleotidyl transferase, ATPase and helicase activities. Acts as an inhibitor of C-sense gene transcription. This is Replication-associated protein from Avena sativa (Oat).